The primary structure comprises 333 residues: 5-formaminoimidazole-4-carboxamide-1-(beta)-D-ribofuranosyl 5'-monophosphate synthetase (333 aa).

5-amino-1-(5-phospho-beta-D-ribosyl)imidazole-4-carboxamide contacts are provided by His-21 and Ser-84. One can recognise an ATP-grasp domain in the interval 118–313 (MELLAAAGIP…YFDEPMDMGE (196 aa)). ATP-binding positions include 141-187 (PVIV…VPAY) and Glu-209. Residue Asn-229 participates in 5-amino-1-(5-phospho-beta-D-ribosyl)imidazole-4-carboxamide binding. Residues Glu-268 and Glu-281 each contribute to the Mg(2+) site.

It belongs to the phosphohexose mutase family. The cofactor is Mg(2+). Requires Mn(2+) as cofactor.

It carries out the reaction 5-amino-1-(5-phospho-beta-D-ribosyl)imidazole-4-carboxamide + formate + ATP = 5-formamido-1-(5-phospho-D-ribosyl)imidazole-4-carboxamide + ADP + phosphate. It functions in the pathway purine metabolism; IMP biosynthesis via de novo pathway; 5-formamido-1-(5-phospho-D-ribosyl)imidazole-4-carboxamide from 5-amino-1-(5-phospho-D-ribosyl)imidazole-4-carboxamide (formate route): step 1/1. In terms of biological role, catalyzes the ATP- and formate-dependent formylation of 5-aminoimidazole-4-carboxamide-1-beta-d-ribofuranosyl 5'-monophosphate (AICAR) to 5-formaminoimidazole-4-carboxamide-1-beta-d-ribofuranosyl 5'-monophosphate (FAICAR) in the absence of folates. The protein is 5-formaminoimidazole-4-carboxamide-1-(beta)-D-ribofuranosyl 5'-monophosphate synthetase of Pyrobaculum calidifontis (strain DSM 21063 / JCM 11548 / VA1).